The primary structure comprises 232 residues: 5'-methylthioadenosine/S-adenosylhomocysteine nucleosidase (232 aa).

The active-site Proton acceptor is the Glu12. Substrate-binding positions include Gly78, Ile152, and 173-174 (ME). Asp197 functions as the Proton donor in the catalytic mechanism.

Belongs to the PNP/UDP phosphorylase family. MtnN subfamily. Homodimer.

It catalyses the reaction S-adenosyl-L-homocysteine + H2O = S-(5-deoxy-D-ribos-5-yl)-L-homocysteine + adenine. The enzyme catalyses S-methyl-5'-thioadenosine + H2O = 5-(methylsulfanyl)-D-ribose + adenine. The catalysed reaction is 5'-deoxyadenosine + H2O = 5-deoxy-D-ribose + adenine. The protein operates within amino-acid biosynthesis; L-methionine biosynthesis via salvage pathway; S-methyl-5-thio-alpha-D-ribose 1-phosphate from S-methyl-5'-thioadenosine (hydrolase route): step 1/2. Its function is as follows. Catalyzes the irreversible cleavage of the glycosidic bond in both 5'-methylthioadenosine (MTA) and S-adenosylhomocysteine (SAH/AdoHcy) to adenine and the corresponding thioribose, 5'-methylthioribose and S-ribosylhomocysteine, respectively. Also cleaves 5'-deoxyadenosine, a toxic by-product of radical S-adenosylmethionine (SAM) enzymes, into 5-deoxyribose and adenine. Thus, is required for in vivo function of the radical SAM enzymes biotin synthase and lipoic acid synthase, that are inhibited by 5'-deoxyadenosine accumulation. The sequence is that of 5'-methylthioadenosine/S-adenosylhomocysteine nucleosidase from Salmonella paratyphi A (strain ATCC 9150 / SARB42).